The chain runs to 611 residues: Pleckstrin homology domain-containing family N member 1 (611 aa).

The disordered stretch occupies residues Met1–Arg45. Gly2 carries N-myristoyl glycine lipidation. Positions Thr61 to Ala100 are interaction with C1QBP. PH domains follow at residues Val96 to Leu192 and Ala222 to Glu319. Residue Tyr302 is modified to Phosphotyrosine. 3 disordered regions span residues Pro323–Pro424, Glu438–Arg468, and Met483–Ile611. Residues Gly341–Ser350 are compositionally biased toward low complexity. The segment covering Ser360 to Arg391 has biased composition (polar residues). Tyr456 is modified (phosphotyrosine). The span at Val498–Ser509 shows a compositional bias: low complexity. A Phosphoserine modification is found at Ser559. The segment covering Arg570–Asp585 has biased composition (basic and acidic residues).

Found in a complex with cytochrome c mRNA and various ribosomal proteins. Interacts with C1QBP. Interacts with ELAVL1. Interacts with BID. In terms of processing, phosphorylation is essential for its mitochondrial localization and regulates its interaction with C1QBP. Ubiquitous. Epressed in several cancer cell lines of differing origin.

It is found in the cell membrane. The protein resides in the mitochondrion. Its subcellular location is the mitochondrion membrane. Its function is as follows. Controls the stability of the leptin mRNA harboring an AU-rich element (ARE) in its 3' UTR, in cooperation with the RNA stabilizer ELAVL1. Decreases the stability of the leptin mRNA by antagonizing the function of ELAVL1 by inducing its atypical recruitment from the nucleus to the cytosol. Binds to cardiolipin (CL), phosphatidic acid (PA), phosphatidylinositol 4-phosphate (PtdIns(4)P) and phosphatidylserine (PS). Promotes apoptosis by enhancing BAX-BAK hetero-oligomerization via interaction with BID in colon cancer cells. This is Pleckstrin homology domain-containing family N member 1 (PLEKHN1) from Homo sapiens (Human).